A 644-amino-acid chain; its full sequence is Arginine--tRNA ligase (644 aa).

The 'HIGH' region motif lies at 134 to 144 (VNPTKPLHMGH).

Belongs to the class-I aminoacyl-tRNA synthetase family.

It is found in the cytoplasm. The enzyme catalyses tRNA(Arg) + L-arginine + ATP = L-arginyl-tRNA(Arg) + AMP + diphosphate. This chain is Arginine--tRNA ligase, found in Thermococcus sibiricus (strain DSM 12597 / MM 739).